Reading from the N-terminus, the 333-residue chain is Adenosine deaminase (333 aa).

Zn(2+) contacts are provided by His-12 and His-14. Positions 14, 16, and 170 each coordinate substrate. His-197 is a binding site for Zn(2+). The active-site Proton donor is Glu-200. Asp-278 contributes to the Zn(2+) binding site. Asp-279 provides a ligand contact to substrate.

This sequence belongs to the metallo-dependent hydrolases superfamily. Adenosine and AMP deaminases family. Adenosine deaminase subfamily. Zn(2+) is required as a cofactor.

The catalysed reaction is adenosine + H2O + H(+) = inosine + NH4(+). The enzyme catalyses 2'-deoxyadenosine + H2O + H(+) = 2'-deoxyinosine + NH4(+). Functionally, catalyzes the hydrolytic deamination of adenosine and 2-deoxyadenosine. In Escherichia coli O45:K1 (strain S88 / ExPEC), this protein is Adenosine deaminase.